Reading from the N-terminus, the 562-residue chain is Potassium-transporting ATPase potassium-binding subunit (562 aa).

Transmembrane regions (helical) follow at residues 6–26 (FLLI…LGGF), 62–82 (YALA…VLLM), 132–152 (GLTV…FALI), 175–195 (LYVL…QGVL), 253–273 (FVQM…FGQV), 283–303 (LIWA…YAEL), 327–347 (FGIL…CGAV), 356–376 (ALGG…FGGV), 379–399 (GLYG…LMIG), 416–436 (MTAL…ALAL), 483–503 (LLLA…VLAI), and 526–546 (LFIG…FIPA).

It belongs to the KdpA family. As to quaternary structure, the system is composed of three essential subunits: KdpA, KdpB and KdpC.

The protein localises to the cell inner membrane. Its function is as follows. Part of the high-affinity ATP-driven potassium transport (or Kdp) system, which catalyzes the hydrolysis of ATP coupled with the electrogenic transport of potassium into the cytoplasm. This subunit binds the periplasmic potassium ions and delivers the ions to the membrane domain of KdpB through an intramembrane tunnel. In Yersinia pseudotuberculosis serotype I (strain IP32953), this protein is Potassium-transporting ATPase potassium-binding subunit.